A 108-amino-acid chain; its full sequence is Large ribosomal subunit protein P1 (108 aa).

The tract at residues 67 to 108 is disordered; sequence PAAAPAEAGGEEKKEEEKKEEEEKEEEVSEEEALAGLSALFG. Positions 84-99 are enriched in acidic residues; it reads KKEEEEKEEEVSEEEA.

This sequence belongs to the eukaryotic ribosomal protein P1/P2 family. Part of the 50S ribosomal subunit. Homodimer, it forms part of the ribosomal stalk which helps the ribosome interact with GTP-bound translation factors. Forms a heptameric uL10/P0(P1)2(P1)2(P1)2 complex, where uL10/P0 forms an elongated spine to which the P1 dimers bind in a sequential fashion.

Its function is as follows. Forms part of the ribosomal stalk, playing a central role in the interaction of the ribosome with GTP-bound translation factors. The stalk complex of P.horikoshii binds to E.coli large subunits and confers on them the ability to interact with eukaryotic elongation factors. Each succesive P1 dimer bound along the P0 spine increases the GTPase activity of elongation factors and increases translation by reconsituted ribosomes. The protein is Large ribosomal subunit protein P1 of Pyrococcus horikoshii (strain ATCC 700860 / DSM 12428 / JCM 9974 / NBRC 100139 / OT-3).